Here is a 149-residue protein sequence, read N- to C-terminus: Low molecular weight protein-tyrosine-phosphatase Wzb (149 aa).

Cys-9 (nucleophile) is an active-site residue. Residue Arg-15 is part of the active site. The Proton donor role is filled by Asp-115.

It belongs to the low molecular weight phosphotyrosine protein phosphatase family.

It catalyses the reaction O-phospho-L-tyrosyl-[protein] + H2O = L-tyrosyl-[protein] + phosphate. Its pathway is glycan metabolism; exopolysaccharide biosynthesis. In terms of biological role, dephosphorylates Wzc. Required for the extracellular polysaccharide colanic acid synthesis. Probably involved in the export of colanic acid from the cell to medium. Involved in protection of cells against contact-dependent growth inhibition (CDI). The sequence is that of Low molecular weight protein-tyrosine-phosphatase Wzb (wzb) from Salmonella typhi.